The sequence spans 589 residues: Alpha-1,2-mannosyltransferase MNN22 (589 aa).

The Cytoplasmic portion of the chain corresponds to 1 to 16 (MGSIFKDGRRILVRPK). Residues 17-33 (SLIICLCLISIIFTQLI) traverse the membrane as a helical segment. Residues 34–589 (RYQYQLIADE…NTIAWLGKKT (556 aa)) lie on the Extracellular side of the membrane. The interval 50–77 (EDHSSSQSLKNTKLNSTRSSSPISPPKS) is disordered. Polar residues predominate over residues 54–71 (SSQSLKNTKLNSTRSSSP). N-linked (GlcNAc...) asparagine glycans are attached at residues N64, N332, and N530.

The protein belongs to the MNN1/MNT family.

The protein resides in the golgi apparatus membrane. Its pathway is protein modification; protein glycosylation. In terms of biological role, alpha-1,2-mannosyltransferase required for cell wall integrity. Responsible for addition of the first alpha-1,2-linked mannose to form the branches on the mannan backbone of oligosaccharides. Addition of alpha-1,2-mannose is required for stabilization of the alpha-1,6-mannose backbone and hence regulates mannan fibril length; and is important for both immune recognition and virulence. This Candida albicans (strain SC5314 / ATCC MYA-2876) (Yeast) protein is Alpha-1,2-mannosyltransferase MNN22 (MNN22).